The primary structure comprises 300 residues: Transcription factor E2F5 (300 aa).

The DNA-binding element occupies 2–73 (GSSRHEKSLG…KNSIQWKGVG (72 aa)). The tract at residues 31-53 (LKAAADTLAVRQKRRIYDITNVL) is leucine-zipper. The short motif at 36 to 73 (DTLAVRQKRRIYDITNVLEGIDLIEKKSKNSIQWKGVG) is the DEF box element. Residues 74-170 (AGCNTKEVID…GQNGQKKYQI (97 aa)) are dimerization. The tract at residues 191 to 250 (SKPVVFPVPPPDDLTQPSSQSSTSVTPPKSTMAAQNLPEQHVSERSQNFQQTPATEISSG) is disordered. Over residues 203-221 (DLTQPSSQSSTSVTPPKST) the composition is skewed to low complexity. The segment covering 235 to 246 (RSQNFQQTPATE) has biased composition (polar residues). The segment at 242-300 (TPATEISSGSISGDIIDELMSSDVFPLLRLSPTPADDYNFNLDDNEGVCDLFDVQILNY) is transactivation. An RBL2 association region spans residues 277–294 (DDYNFNLDDNEGVCDLFD).

The protein belongs to the E2F/DP family. As to quaternary structure, component of the DRTF1/E2F transcription factor complex. Binds cooperatively with DP-1 to E2F sites. Interaction with retinoblastoma protein RB1 or proteins RBL1 and RBL2 inhibits the E2F transactivation domain. Component of the DREAM complex (also named LINC complex) at least composed of E2F4, E2F5, LIN9, LIN37, LIN52, LIN54, MYBL1, MYBL2, RBL1, RBL2, RBBP4, TFDP1 and TFDP2. The complex exists in quiescent cells where it represses cell cycle-dependent genes. It dissociates in S phase when LIN9, LIN37, LIN52 and LIN54 form a subcomplex that binds to MYBL2. As to expression, found in placenta followed by kidney, lung and brain.

Its subcellular location is the nucleus. In terms of biological role, transcriptional activator that binds to E2F sites, these sites are present in the promoter of many genes whose products are involved in cell proliferation. May mediate growth factor-initiated signal transduction. It is likely involved in the early responses of resting cells to growth factor stimulation. Specifically required for multiciliate cell differentiation: together with MCIDAS and E2F5, binds and activate genes required for centriole biogenesis. The chain is Transcription factor E2F5 (E2f5) from Rattus norvegicus (Rat).